Here is a 241-residue protein sequence, read N- to C-terminus: L-aspartate dehydrogenase (241 aa).

Alanine 109 and asparagine 164 together coordinate NAD(+). Residue histidine 193 is part of the active site.

The protein belongs to the L-aspartate dehydrogenase family.

It catalyses the reaction L-aspartate + NADP(+) + H2O = oxaloacetate + NH4(+) + NADPH + H(+). The catalysed reaction is L-aspartate + NAD(+) + H2O = oxaloacetate + NH4(+) + NADH + H(+). It participates in cofactor biosynthesis; NAD(+) biosynthesis; iminoaspartate from L-aspartate (dehydrogenase route): step 1/1. Functionally, specifically catalyzes the NAD or NADP-dependent dehydrogenation of L-aspartate to iminoaspartate. In Thermotoga sp. (strain RQ2), this protein is L-aspartate dehydrogenase.